The sequence spans 412 residues: Imidazolonepropionase (412 aa).

Positions 76 and 78 each coordinate Fe(3+). Zn(2+)-binding residues include His76 and His78. 4-imidazolone-5-propanoate is bound by residues Arg85, Tyr148, and His181. Tyr148 serves as a coordination point for N-formimidoyl-L-glutamate. Residue His242 participates in Fe(3+) binding. Residue His242 coordinates Zn(2+). Glu245 lines the 4-imidazolone-5-propanoate pocket. Asp317 is a Fe(3+) binding site. Residue Asp317 coordinates Zn(2+). The N-formimidoyl-L-glutamate site is built by Asn319 and Gly321. Ser322 is a binding site for 4-imidazolone-5-propanoate.

It belongs to the metallo-dependent hydrolases superfamily. HutI family. Zn(2+) is required as a cofactor. Fe(3+) serves as cofactor.

It localises to the cytoplasm. The enzyme catalyses 4-imidazolone-5-propanoate + H2O = N-formimidoyl-L-glutamate. It participates in amino-acid degradation; L-histidine degradation into L-glutamate; N-formimidoyl-L-glutamate from L-histidine: step 3/3. Its function is as follows. Catalyzes the hydrolytic cleavage of the carbon-nitrogen bond in imidazolone-5-propanoate to yield N-formimidoyl-L-glutamate. It is the third step in the universal histidine degradation pathway. The chain is Imidazolonepropionase from Staphylococcus saprophyticus subsp. saprophyticus (strain ATCC 15305 / DSM 20229 / NCIMB 8711 / NCTC 7292 / S-41).